The sequence spans 562 residues: Urease subunit alpha (562 aa).

The region spanning 131–562 is the Urease domain; the sequence is GGMDCHIHFI…LPMAQRYFLF (432 aa). Positions 136, 138, and 219 each coordinate Ni(2+). Lys-219 carries the N6-carboxylysine modification. Substrate is bound at residue His-221. Residues His-248 and His-274 each contribute to the Ni(2+) site. The Proton donor role is filled by His-322. Asp-362 contacts Ni(2+).

This sequence belongs to the metallo-dependent hydrolases superfamily. Urease alpha subunit family. As to quaternary structure, heterotrimer of UreA (gamma), UreB (beta) and UreC (alpha) subunits. Three heterotrimers associate to form the active enzyme. Ni cation serves as cofactor. In terms of processing, carboxylation allows a single lysine to coordinate two nickel ions.

It is found in the cytoplasm. The enzyme catalyses urea + 2 H2O + H(+) = hydrogencarbonate + 2 NH4(+). The protein operates within nitrogen metabolism; urea degradation; CO(2) and NH(3) from urea (urease route): step 1/1. This is Urease subunit alpha from Paracoccus denitrificans (strain Pd 1222).